The sequence spans 513 residues: ATP synthase subunit alpha (513 aa).

ATP is bound at residue 169-176; it reads GDRQTGKT.

This sequence belongs to the ATPase alpha/beta chains family. In terms of assembly, F-type ATPases have 2 components, CF(1) - the catalytic core - and CF(0) - the membrane proton channel. CF(1) has five subunits: alpha(3), beta(3), gamma(1), delta(1), epsilon(1). CF(0) has three main subunits: a(1), b(2) and c(9-12). The alpha and beta chains form an alternating ring which encloses part of the gamma chain. CF(1) is attached to CF(0) by a central stalk formed by the gamma and epsilon chains, while a peripheral stalk is formed by the delta and b chains.

It is found in the cell inner membrane. The enzyme catalyses ATP + H2O + 4 H(+)(in) = ADP + phosphate + 5 H(+)(out). Functionally, produces ATP from ADP in the presence of a proton gradient across the membrane. The alpha chain is a regulatory subunit. This Salmonella arizonae (strain ATCC BAA-731 / CDC346-86 / RSK2980) protein is ATP synthase subunit alpha.